Consider the following 245-residue polypeptide: Small ribosomal subunit protein uS2 (245 aa).

Belongs to the universal ribosomal protein uS2 family.

This is Small ribosomal subunit protein uS2 from Dehalococcoides mccartyi (strain CBDB1).